Reading from the N-terminus, the 338-residue chain is Solute carrier family 35 member G5 (338 aa).

Residues 1-28 (MAGSHPYFNLPDSTHPSPPSGPPSLRWH) form a disordered region. The next 9 helical transmembrane spans lie at 37–57 (TNGL…VGPL), 67–87 (LPSL…ALLL), 105–125 (CFCA…VQVV), 160–180 (CGLL…LWTL), 190–210 (ALGY…LLVY), 221–241 (TVAF…LFVL), 250–270 (LLSW…FTCV), 281–301 (LVCA…YYML), and 310–330 (IMGA…NLSC). Residues 49 to 174 (LPAGFVGPLS…SILGLIIIVG (126 aa)) form the EamA 1 domain. Positions 272–325 (YAVTKAHPALVCAVLHSEVVVALILQYYMLPETVAPSDIMGAGVVLGNITIIPA) constitute an EamA 2 domain.

The protein belongs to the SLC35G solute transporter family.

The protein localises to the membrane. This is Solute carrier family 35 member G5 (SLC35G5) from Gorilla gorilla gorilla (Western lowland gorilla).